A 229-amino-acid polypeptide reads, in one-letter code: uncharacterized protein (229 aa).

A disordered region spans residues 1-102; it reads MKLLGRKKSY…AASKAQITDR (102 aa). Residues 73–94 show a composition bias toward basic residues; it reads ARRKSLAPPKCHRAERRAKRAA. The next 2 helical transmembrane spans lie at 137–157 and 159–179; these read LGLF…VPQL and LYMS…GIIL.

It is found in the cell membrane. This is an uncharacterized protein from Mycobacterium leprae (strain TN).